The primary structure comprises 364 residues: MTHQFPPLTTEQKKELHEIALRIVSPGKGILAADESIGSMGKRLNQIGVENNEENRRLFRQVLFTADDRIDNCIGGVIFFHETLYQNSDDGVPFVKMIKDKGITIGIKVDKGVVPLPGTNGETATQGLDGLSERCAQYKKDGADFAKWRCVMKISETTPSNLCITENAKVLARYASICQQHGIVPIVEPEILPDGDHNLKRCQFVTERVLAAVYKAMFDHHVYLEGTLLKPNMVTPGHGCPTKYSAEEVAMATVTALRRTVPPAVTGVTFLSGGQSEEEASINLSAINNCRLVKPWALTFSFGRALQASALKTWRGQRENEAAATEEFIKRAEINSLASQGKYTVCGDSSGATGLSHYLSSYAY.

Residues R56 and K147 each contribute to the substrate site. Catalysis depends on E188, which acts as the Proton acceptor. The active-site Schiff-base intermediate with dihydroxyacetone-P is K230.

It belongs to the class I fructose-bisphosphate aldolase family. In terms of assembly, homotetramer. As to expression, expressed specifically in Purkinje cells in the brain.

The enzyme catalyses beta-D-fructose 1,6-bisphosphate = D-glyceraldehyde 3-phosphate + dihydroxyacetone phosphate. Its pathway is carbohydrate degradation; glycolysis; D-glyceraldehyde 3-phosphate and glycerone phosphate from D-glucose: step 4/4. In Danio rerio (Zebrafish), this protein is Fructose-bisphosphate aldolase C-A.